Consider the following 356-residue polypeptide: Guanine nucleotide-binding protein alpha-2 subunit (356 aa).

The interval 1–25 is disordered; sequence MGLCQSEEEKVGSQKSRAIDKEIKQ. G2 carries the N-myristoyl glycine lipid modification. A lipid anchor (S-palmitoyl cysteine) is attached at C4. Over residues 7 to 25 the composition is skewed to basic and acidic residues; sequence EEEKVGSQKSRAIDKEIKQ. The region spanning 14-338 is the G-alpha domain; it reads QKSRAIDKEI…TDTNQVQKIL (325 aa). The segment at 17 to 30 is G1 motif; the sequence is RAIDKEIKQNQSND. Positions 25, 27, 28, 29, 30, 135, 160, 166, 188, 254, 255, 257, and 310 each coordinate GTP. N29 lines the Mg(2+) pocket. The G2 motif stretch occupies residues 158-166; that stretch reads FFENLDRIA. Residue A166 participates in Mg(2+) binding. A G3 motif region spans residues 181-190; sequence RTKTTGIVEV. The G4 motif stretch occupies residues 250 to 257; it reads MRLFESIC. The G5 motif stretch occupies residues 308-313; that stretch reads QKFEAL.

This sequence belongs to the G-alpha family. G(q) subfamily. As to quaternary structure, g proteins are composed of 3 units; alpha, beta and gamma. The alpha chain contains the guanine nucleotide binding site. Mg(2+) serves as cofactor.

Functionally, guanine nucleotide-binding proteins (G proteins) are involved as modulators or transducers in various transmembrane signaling systems. Involved in behavioral responses to P.aeruginosa by controlling the expression of daf-7, a member of the TGF-beta family, in ASJ sensory neurons. The sequence is that of Guanine nucleotide-binding protein alpha-2 subunit (gpa-2) from Caenorhabditis briggsae.